Consider the following 198-residue polypeptide: ATP-dependent Clp protease proteolytic subunit (198 aa).

Residue S101 is the Nucleophile of the active site. H126 is a catalytic residue.

The protein belongs to the peptidase S14 family. Component of the chloroplastic Clp protease core complex.

It is found in the plastid. It localises to the chloroplast stroma. It carries out the reaction Hydrolysis of proteins to small peptides in the presence of ATP and magnesium. alpha-casein is the usual test substrate. In the absence of ATP, only oligopeptides shorter than five residues are hydrolyzed (such as succinyl-Leu-Tyr-|-NHMec, and Leu-Tyr-Leu-|-Tyr-Trp, in which cleavage of the -Tyr-|-Leu- and -Tyr-|-Trp bonds also occurs).. Its function is as follows. Cleaves peptides in various proteins in a process that requires ATP hydrolysis. Has a chymotrypsin-like activity. Plays a major role in the degradation of misfolded proteins. The chain is ATP-dependent Clp protease proteolytic subunit from Solanum bulbocastanum (Wild potato).